The sequence spans 538 residues: Chaperonin GroEL (538 aa).

Residues Thr29–Pro32, Asp86–Thr90, Gly413, Asn476–Ala478, and Asp492 each bind ATP.

Belongs to the chaperonin (HSP60) family. In terms of assembly, forms a cylinder of 14 subunits composed of two heptameric rings stacked back-to-back. Interacts with the co-chaperonin GroES.

Its subcellular location is the cytoplasm. It catalyses the reaction ATP + H2O + a folded polypeptide = ADP + phosphate + an unfolded polypeptide.. In terms of biological role, together with its co-chaperonin GroES, plays an essential role in assisting protein folding. The GroEL-GroES system forms a nano-cage that allows encapsulation of the non-native substrate proteins and provides a physical environment optimized to promote and accelerate protein folding. This Staphylococcus aureus (strain NCTC 8325 / PS 47) protein is Chaperonin GroEL.